The chain runs to 352 residues: MNAFLFEARIPRVVFGAGALQHLVREIDAMGSTRALVLSTPEQSADAERVAGILGSRAVGVFPRATMHVPIELAREARLEASRLGADCAVAIGGGSTTGLGKAIALESGLPILSIPTTYAGSEMTPIYGVTDNGVKQTGRDARVLPRTVIYDPELTLGLPIRMTVSSGLNAIAHAAESLYAHDGNPVIGLMAEEGIRAIGAALTPLQANPADLVARSDALYGAWLCGAVLGAVSMGLHHKLCHTLGGAFNLPHAELHTVILPHALAYNSARASQAMERIARALGVSSAPRGLFDLAERSGLPVSLAALGMPREGIELAADMAVKNPYPNPRPLERDAIRVLLEHAYDGVRPS.

This sequence belongs to the iron-containing alcohol dehydrogenase family.

It catalyses the reaction 3-oxoadipate + NAD(+) = maleylacetate + NADH + H(+). It carries out the reaction 3-oxoadipate + NADP(+) = maleylacetate + NADPH + H(+). It participates in xenobiotic degradation; (2,4,5-trichlorophenoxy)acetate degradation. This is Maleylacetate reductase (tftE) from Burkholderia cepacia (Pseudomonas cepacia).